The chain runs to 268 residues: ClpXP adapter protein SpxH (268 aa).

The protein belongs to the SpxH family. In terms of assembly, interacts with Spx.

Its subcellular location is the cytoplasm. Functionally, adapter protein required for efficient degradation of Spx by ClpXP under non-stress conditions. Interaction with Spx stabilizes Spx and exposes the C-terminus of Spx for recognition and proteolysis by ClpXP. In Staphylococcus aureus (strain COL), this protein is ClpXP adapter protein SpxH.